The chain runs to 73 residues: Large ribosomal subunit protein uL30 (73 aa).

It belongs to the universal ribosomal protein uL30 family. Part of the 50S ribosomal subunit.

The polypeptide is Large ribosomal subunit protein uL30 (Borreliella afzelii (strain PKo) (Borrelia afzelii)).